The sequence spans 245 residues: rRNA adenine N-6-methyltransferase (245 aa).

S-adenosyl-L-methionine is bound by residues Asn10, Leu12, Gly37, Glu58, Asp83, and Asn100.

Belongs to the class I-like SAM-binding methyltransferase superfamily. rRNA adenine N(6)-methyltransferase family.

It catalyses the reaction adenosine(2085) in 23S rRNA + 2 S-adenosyl-L-methionine = N(6)-dimethyladenosine(2085) in 23S rRNA + 2 S-adenosyl-L-homocysteine + 2 H(+). Its function is as follows. This protein produces a dimethylation of the adenine residue at position 2085 in 23S rRNA, resulting in reduced affinity between ribosomes and macrolide-lincosamide-streptogramin B antibiotics. The chain is rRNA adenine N-6-methyltransferase (ermB) from Enterococcus faecalis (strain ATCC 700802 / V583).